The sequence spans 208 residues: Uracil phosphoribosyltransferase (208 aa).

Residues R78, R103, and D130–T138 each bind 5-phospho-alpha-D-ribose 1-diphosphate. Residues I193 and G198–A200 each bind uracil. D199 contributes to the 5-phospho-alpha-D-ribose 1-diphosphate binding site.

It belongs to the UPRTase family. Requires Mg(2+) as cofactor.

It carries out the reaction UMP + diphosphate = 5-phospho-alpha-D-ribose 1-diphosphate + uracil. It participates in pyrimidine metabolism; UMP biosynthesis via salvage pathway; UMP from uracil: step 1/1. Its activity is regulated as follows. Allosterically activated by GTP. Its function is as follows. Catalyzes the conversion of uracil and 5-phospho-alpha-D-ribose 1-diphosphate (PRPP) to UMP and diphosphate. The chain is Uracil phosphoribosyltransferase from Campylobacter concisus (strain 13826).